The primary structure comprises 206 residues: Small ribosomal subunit protein uS7 (206 aa).

It belongs to the universal ribosomal protein uS7 family. As to quaternary structure, component of the small ribosomal subunit.

The protein localises to the cytoplasm. Its function is as follows. Component of the small ribosomal subunit. The ribosome is a large ribonucleoprotein complex responsible for the synthesis of proteins in the cell. In Entamoeba histolytica (strain ATCC 30459 / HM-1:IMSS / ABRM), this protein is Small ribosomal subunit protein uS7.